Reading from the N-terminus, the 307-residue chain is Metapyrocatechase (307 aa).

2 VOC domains span residues 7–122 (RPGH…LYAD) and 150–269 (RFDH…VFCG). The Fe cation site is built by histidine 153, histidine 214, and glutamate 265.

This sequence belongs to the extradiol ring-cleavage dioxygenase family. Homotetramer. Fe(2+) serves as cofactor.

It catalyses the reaction catechol + O2 = (2Z,4E)-2-hydroxy-6-oxohexa-2,4-dienoate + H(+). The protein operates within aromatic compound metabolism; benzoate degradation via hydroxylation. This Pseudomonas sp. (strain CF600) protein is Metapyrocatechase (dmpB).